We begin with the raw amino-acid sequence, 131 residues long: Transcription antitermination protein NusB (131 aa).

It belongs to the NusB family.

Functionally, involved in transcription antitermination. Required for transcription of ribosomal RNA (rRNA) genes. Binds specifically to the boxA antiterminator sequence of the ribosomal RNA (rrn) operons. This Campylobacter concisus (strain 13826) protein is Transcription antitermination protein NusB.